The primary structure comprises 261 residues: Proteasome assembly chaperone 2 (261 aa).

Belongs to the PSMG2 family. As to quaternary structure, forms a heterodimer with psmg1. In terms of processing, degraded by the proteasome upon completion of 20S proteasome maturation.

The protein localises to the nucleus. Chaperone protein which promotes assembly of the 20S proteasome as part of a heterodimer with psmg1. This is Proteasome assembly chaperone 2 from Xenopus tropicalis (Western clawed frog).